We begin with the raw amino-acid sequence, 25 residues long: GMNLVFVGAEVAPWSKTGGLGDVLA.

ADP-alpha-D-glucose is bound at residue Lys16.

Belongs to the glycosyltransferase 1 family. Bacterial/plant glycogen synthase subfamily. In terms of tissue distribution, expressed in endosperm.

It is found in the plastid. The protein resides in the chloroplast. It localises to the amyloplast. It carries out the reaction an NDP-alpha-D-glucose + [(1-&gt;4)-alpha-D-glucosyl](n) = [(1-&gt;4)-alpha-D-glucosyl](n+1) + a ribonucleoside 5'-diphosphate + H(+). Its pathway is glycan biosynthesis; starch biosynthesis. Functionally, required for the synthesis of amylose in endosperm. This is Granule-bound starch synthase 1, chloroplastic/amyloplastic from Fagopyrum esculentum (Common buckwheat).